The primary structure comprises 263 residues: MTDTPQNPTADLPIKVTARNVTVSYSGKQALHDVSIDIPDRSVTAFIGPSGCGKSTFLRCLNRMNDTIDGAVVGGSLTIDGQEINDKTIDPVVLRASVGMVFQKPNPFPKSIYDNVAYGPRIHGLALTRPELDEIVENALRKAGLWNEVSDRLNHPGTGLSGGQQQRLVIARAIAVNPEVILMDEPCSALDPIATARIEELIDELRENYCIIIVTHSMQQAARVSQHTAFFHMGNLVEYGPTEDIFTNPRDTRTQDYITGRFG.

One can recognise an ABC transporter domain in the interval 16 to 258; the sequence is VTARNVTVSY…PRDTRTQDYI (243 aa). 48-55 serves as a coordination point for ATP; the sequence is GPSGCGKS.

This sequence belongs to the ABC transporter superfamily. Phosphate importer (TC 3.A.1.7) family. As to quaternary structure, the complex is composed of two ATP-binding proteins (PstB), two transmembrane proteins (PstC and PstA) and a solute-binding protein (PstS).

It localises to the cell inner membrane. The catalysed reaction is phosphate(out) + ATP + H2O = ADP + 2 phosphate(in) + H(+). In terms of biological role, part of the ABC transporter complex PstSACB involved in phosphate import. Responsible for energy coupling to the transport system. This Maricaulis maris (strain MCS10) (Caulobacter maris) protein is Phosphate import ATP-binding protein PstB.